The primary structure comprises 201 residues: Kunitz type trypsin inhibitor 104 (201 aa).

Positions 1 to 24 are cleaved as a signal peptide; that stretch reads MSTRSLTIFILAHVWLLMATTSIA. Disulfide bonds link cysteine 63–cysteine 110, cysteine 161–cysteine 173, and cysteine 166–cysteine 169.

It belongs to the protease inhibitor I3 (leguminous Kunitz-type inhibitor) family. In terms of assembly, interacts with CP.

The protein localises to the secreted. It localises to the extracellular space. Its subcellular location is the apoplast. Protease inhibitor involved in the control of mycorrhiza establishment and arbuscule development during root colonization by arbuscular mycorrhizal (AM) fungi (e.g. Rhizophagus irregularis). The chain is Kunitz type trypsin inhibitor 104 from Medicago truncatula (Barrel medic).